We begin with the raw amino-acid sequence, 1065 residues long: Carbamoyl phosphate synthase large chain (1065 aa).

Residues 1–401 (MPKRRDIETI…SLLKAVRSLE (401 aa)) are carboxyphosphate synthetic domain. ATP contacts are provided by Arg129, Arg169, Gly175, Gly176, Arg208, Ile210, Glu215, Gly241, Ile242, His243, Gln284, and Glu298. The ATP-grasp 1 domain maps to 133–327 (RALMNELGEP…IAKLAAKIAV (195 aa)). Positions 284, 298, and 300 each coordinate Mg(2+). Residues Gln284, Glu298, and Asn300 each coordinate Mn(2+). Residues 402 to 546 (IGVHHLELNE…YSTYEEENES (145 aa)) are oligomerization domain. Residues 547-929 (IVTEKPSVIV…ALYKGLVASG (383 aa)) form a carbamoyl phosphate synthetic domain region. An ATP-grasp 2 domain is found at 671-861 (EQALSELGIP…MANLATKAIL (191 aa)). 10 residues coordinate ATP: Arg707, Arg746, Ile748, Glu752, Gly777, Val778, His779, Ser780, Gln820, and Glu832. Gln820, Glu832, and Asn834 together coordinate Mg(2+). Positions 820, 832, and 834 each coordinate Mn(2+). Residues 930–1065 (IHIQPHGAVL…TAMTEGLVRS (136 aa)) form the MGS-like domain. Residues 930–1065 (IHIQPHGAVL…TAMTEGLVRS (136 aa)) are allosteric domain.

This sequence belongs to the CarB family. Composed of two chains; the small (or glutamine) chain promotes the hydrolysis of glutamine to ammonia, which is used by the large (or ammonia) chain to synthesize carbamoyl phosphate. Tetramer of heterodimers (alpha,beta)4. The cofactor is Mg(2+). Mn(2+) is required as a cofactor.

It carries out the reaction hydrogencarbonate + L-glutamine + 2 ATP + H2O = carbamoyl phosphate + L-glutamate + 2 ADP + phosphate + 2 H(+). The catalysed reaction is hydrogencarbonate + NH4(+) + 2 ATP = carbamoyl phosphate + 2 ADP + phosphate + 2 H(+). It participates in amino-acid biosynthesis; L-arginine biosynthesis; carbamoyl phosphate from bicarbonate: step 1/1. Its pathway is pyrimidine metabolism; UMP biosynthesis via de novo pathway; (S)-dihydroorotate from bicarbonate: step 1/3. Its function is as follows. Large subunit of the glutamine-dependent carbamoyl phosphate synthetase (CPSase). CPSase catalyzes the formation of carbamoyl phosphate from the ammonia moiety of glutamine, carbonate, and phosphate donated by ATP, constituting the first step of 2 biosynthetic pathways, one leading to arginine and/or urea and the other to pyrimidine nucleotides. The large subunit (synthetase) binds the substrates ammonia (free or transferred from glutamine from the small subunit), hydrogencarbonate and ATP and carries out an ATP-coupled ligase reaction, activating hydrogencarbonate by forming carboxy phosphate which reacts with ammonia to form carbamoyl phosphate. This Bacillus caldolyticus protein is Carbamoyl phosphate synthase large chain.